Here is a 439-residue protein sequence, read N- to C-terminus: Xaa-Pro dipeptidase (439 aa).

Mn(2+) contacts are provided by Asp-244, Asp-255, His-335, Glu-380, and Glu-419.

The protein belongs to the peptidase M24B family. Bacterial-type prolidase subfamily. Mn(2+) is required as a cofactor.

The enzyme catalyses Xaa-L-Pro dipeptide + H2O = an L-alpha-amino acid + L-proline. Functionally, splits dipeptides with a prolyl residue in the C-terminal position. The chain is Xaa-Pro dipeptidase from Shewanella oneidensis (strain ATCC 700550 / JCM 31522 / CIP 106686 / LMG 19005 / NCIMB 14063 / MR-1).